A 201-amino-acid polypeptide reads, in one-letter code: Adenylyl-sulfate kinase (201 aa).

ATP is bound at residue 35-42; it reads GLSGSGKS. The Phosphoserine intermediate role is filled by Ser-109.

The protein belongs to the APS kinase family.

It catalyses the reaction adenosine 5'-phosphosulfate + ATP = 3'-phosphoadenylyl sulfate + ADP + H(+). It participates in sulfur metabolism; hydrogen sulfide biosynthesis; sulfite from sulfate: step 2/3. Functionally, catalyzes the synthesis of activated sulfate. In Enterobacter sp. (strain 638), this protein is Adenylyl-sulfate kinase.